Here is a 103-residue protein sequence, read N- to C-terminus: MATETMGIALGMIETRGLVPAIEAADAMTKAAEVRLIGREFVGGGYVTVLVRGETGAVNAAVRAGADACERVGDGLVAAHIIARPHREVEPALGNGDFLGQKD.

Positions 9–94 constitute a BMC domain; it reads ALGMIETRGL…PHREVEPALG (86 aa).

Belongs to the bacterial microcompartments protein family. CsoS1 subfamily. As to quaternary structure, homohexamer with a small central pore. A CsoS1-CsoS1D-CsoS2 complex can be isolated following expression in E.coli. Forms a CsoS2-CsoS1-RuBisCO complex.

The protein resides in the carboxysome. Its function is as follows. The major shell protein of the carboxysome, a polyhedral inclusion where RuBisCO (ribulose bisphosphate carboxylase, ccbL-ccbS) is sequestered. Assembles into hexamers which make sheets that form the facets of the polyhedral carboxysome. There are estimated to be 538 CsoS1 hexamers per carboxysome; note this number includes the probable carboxysome shell vertex proteins CsoS4A and CsoS4B. The sequence is that of Major carboxysome shell protein CsoS1 from Prochlorococcus marinus subsp. pastoris (strain CCMP1986 / NIES-2087 / MED4).